A 63-amino-acid polypeptide reads, in one-letter code: Chymotrypsin inhibitor SCI-III (63 aa).

Residues 10–61 (CEQAFGDAGLCFGYMKLYSYNQETKNCEEFIYGGCQGNDNRFSTLAECEQKC) enclose the BPTI/Kunitz inhibitor domain. Disulfide bonds link cysteine 10-cysteine 61, cysteine 20-cysteine 44, and cysteine 36-cysteine 57.

Functionally, inhibits chymotrypsin and thus avoids the accidental chymotrypsin-mediated activation of prophenoloxidase. This enzyme is required by the insect immune system to produce melanin which is used to engulf foreign objects. This is Chymotrypsin inhibitor SCI-III from Bombyx mori (Silk moth).